Reading from the N-terminus, the 147-residue chain is DNA polymerase epsilon subunit 3 (147 aa).

An N-acetylalanine modification is found at Ala-2. Thr-83 is subject to Phosphothreonine. The stretch at 85–146 (LKEALEAYRR…EEQNEEEEVD (62 aa)) forms a coiled coil. A compositionally biased stretch (basic and acidic residues) spans 93–124 (RREQKGKKEASEQKKKDKDKKTDSEEQDKSRD). Residues 93 to 147 (RREQKGKKEASEQKKKDKDKKTDSEEQDKSRDEDNDEDEERLEEEEQNEEEEVDN) form a disordered region. At Ser-122 the chain carries Phosphoserine. Residues 125–147 (EDNDEDEERLEEEEQNEEEEVDN) show a composition bias toward acidic residues.

Component of the DNA polymerase epsilon complex consisting of four subunits: the catalytic subunit POLE and the accessory subunits POLE2, POLE3 and POLE4. Interaction with POLE4 is a prerequisite for further binding with POLE and POLE2. Heterodimer with CHRAC1; binds to DNA. Component of the CHRAC ISWI chromatin remodeling complex at least composed of SMARCA5/SNF2H, BAZ1A/ACF1, CHRAC1 and POLE3; the complex preferentially binds DNA through the CHRAC1-POLE3 heterodimer and possesses ATP-dependent nucleosome-remodeling activity. Within the complex, the heterodimer with CHRAC1 interacts with SMARCA5/SNF2H; the interaction is direct and enhances nucleosome sliding activity by the SMARCA5/SNF2H and BAZ1A/ACF1 interaction. Within the complex, the heterodimer with CHRAC1 interacts with BAZ1A/ACF1; the interactions are direct.

The protein localises to the nucleus. Accessory component of the DNA polymerase epsilon complex. Participates in DNA repair and in chromosomal DNA replication. Forms a complex with CHRAC1 and binds naked DNA, which is then incorporated into chromatin, aided by the nucleosome-remodeling activity of ISWI/SNF2H and ACF1. Does not enhance nucleosome sliding activity of the ACF-5 ISWI chromatin remodeling complex. The chain is DNA polymerase epsilon subunit 3 (POLE3) from Bos taurus (Bovine).